Here is a 249-residue protein sequence, read N- to C-terminus: T-cell immunoreceptor with Ig and ITIM domains (249 aa).

Residues 1 to 28 (MHGWLLLVWVQGLIQAAFLATAIGATAG) form the signal peptide. Positions 29-127 (TIDTKRNISA…GGIYKGRIFL (99 aa)) constitute an Ig-like V-type domain. The Extracellular portion of the chain corresponds to 29 to 148 (TIDTKRNISA…LAQFQTAPLG (120 aa)). A homodimerization region spans residues 35-45 (NISAEEGGSVI). Residues C48 and C111 are joined by a disulfide bond. N-linked (GlcNAc...) asparagine glycosylation occurs at N104. The helical transmembrane segment at 149–169 (GTMAAVLGLICLMVTGVTVLA) threads the bilayer. Residues 170–249 (RKDKSIRMHS…ESFIAVSKTG (80 aa)) lie on the Cytoplasmic side of the membrane. The disordered stretch occupies residues 182–222 (SGLGRTEAEPQEWNLRSLSSPGSPVQTQTAPAGPCGEQAED). Residues 195-211 (NLRSLSSPGSPVQTQTA) show a composition bias toward polar residues. The ITIM motif signature appears at 234-239 (LSYRSL).

As to quaternary structure, homodimer in cis; binds with high affinity to PVR, forming a heterotetrameric assembly of two TIGIT and two PVR molecules. Binds with lower affinity to NECTIN2 and NECTIN3. Interacts with GRB2. Interacts with NECTIN4.

The protein resides in the cell membrane. In terms of biological role, inhibitory receptor that plays a role in the modulation of immune responses. Suppresses T-cell activation by promoting the generation of mature immunoregulatory dendritic cells. Upon binding to its ligands PVR/CD155 or NECTIN2/CD112, which are expressed on antigen-presenting cells, sends inhibitory signals to the T-cell or NK cell. Mechanistically, interaction with ligand leads to phosphorylation of the cytoplasmic tail by Src family tyrosine kinases such as FYN or LCK, allowing subsequent binding to adapter GRB2 and SHIP1/INPP5D. In turn, inhibits PI3K and MAPK signaling cascades. In addition, associates with beta-arrestin-2/ARRB2 to recruit SHIP1/INPP5D that suppresses autoubiquitination of TRAF6 and subsequently inhibits NF-kappa-B signaling pathway. Also acts as a receptor for NECTIN4 to inhibit NK cell cytotoxicity. The polypeptide is T-cell immunoreceptor with Ig and ITIM domains (Mus musculus (Mouse)).